Reading from the N-terminus, the 324-residue chain is Malate dehydrogenase (324 aa).

Residues 21 to 26 (GAGRVG) and Asp45 each bind NAD(+). Substrate contacts are provided by Arg94 and Arg100. Residues Asn107 and 130-132 (VTN) each bind NAD(+). The substrate site is built by Asn132 and Arg163. Catalysis depends on His187, which acts as the Proton acceptor.

The protein belongs to the LDH/MDH superfamily. MDH type 3 family.

The enzyme catalyses (S)-malate + NAD(+) = oxaloacetate + NADH + H(+). Its function is as follows. Catalyzes the reversible oxidation of malate to oxaloacetate. The polypeptide is Malate dehydrogenase (Trichormus variabilis (strain ATCC 29413 / PCC 7937) (Anabaena variabilis)).